Consider the following 351-residue polypeptide: Pentatricopeptide repeat-containing protein At3g56030, mitochondrial (351 aa).

The transit peptide at 1–41 (MFRLKPLISVDLNQTMSLLRRFVKEANNSRFLLQSISGRSF) directs the protein to the mitochondrion. PPR repeat units lie at residues 124-158 (RKHS…EFGL), 159-193 (STCV…AIPV), 194-224 (DVTS…MEEE), and 232-266 (DTRT…GLSV).

Belongs to the PPR family. P subfamily.

It is found in the mitochondrion. This is Pentatricopeptide repeat-containing protein At3g56030, mitochondrial from Arabidopsis thaliana (Mouse-ear cress).